A 263-amino-acid chain; its full sequence is Phosphatidylglycerol--prolipoprotein diacylglyceryl transferase (263 aa).

4 helical membrane passes run 15–35 (ISIHWYAICIVSGLLLAVYLA), 52–72 (FILLAFPIAIVGARLYYVIFQ), 83–103 (IFAIWNGGIAIYGGLIAGAAV), and 112–132 (AIAVLDFLDIAAPGVMIAQSI). Arg134 is a binding site for a 1,2-diacyl-sn-glycero-3-phospho-(1'-sn-glycerol). Transmembrane regions (helical) follow at residues 170-190 (VPTFLYESLWNLVGFSIILGL), 200-220 (GDVTSFYLIWYGLGRFVIEGM), and 230-250 (LRVSQWVSISIIILGAVLLYF).

It belongs to the Lgt family.

It is found in the cell membrane. The catalysed reaction is L-cysteinyl-[prolipoprotein] + a 1,2-diacyl-sn-glycero-3-phospho-(1'-sn-glycerol) = an S-1,2-diacyl-sn-glyceryl-L-cysteinyl-[prolipoprotein] + sn-glycerol 1-phosphate + H(+). The protein operates within protein modification; lipoprotein biosynthesis (diacylglyceryl transfer). In terms of biological role, catalyzes the transfer of the diacylglyceryl group from phosphatidylglycerol to the sulfhydryl group of the N-terminal cysteine of a prolipoprotein, the first step in the formation of mature lipoproteins. The polypeptide is Phosphatidylglycerol--prolipoprotein diacylglyceryl transferase (Streptococcus thermophilus (strain ATCC BAA-250 / LMG 18311)).